Reading from the N-terminus, the 391-residue chain is Tyrosinase-like protein phomQ2 (391 aa).

The segment at 1–21 (MDNVGCEASSSRDPKGKKAVG) is disordered. Residues 61-81 (IRGFICATIIFVVCLGALSYI) form a helical membrane-spanning segment. N-linked (GlcNAc...) asparagine glycans are attached at residues asparagine 97 and asparagine 141. The Cu cation site is built by histidine 160 and histidine 169. N-linked (GlcNAc...) asparagine glycosylation is found at asparagine 204, asparagine 246, and asparagine 261. Cu cation-binding residues include histidine 298 and histidine 324. N-linked (GlcNAc...) asparagine glycosylation is present at asparagine 353.

It belongs to the tyrosinase family. The cofactor is Cu(2+).

The protein localises to the membrane. The protein operates within mycotoxin biosynthesis. Functionally, tyrosinase-like protein; part of the gene cluster that mediates the biosynthesis of the phomopsins, a group of hexapeptide mycotoxins which infects lupins and causes lupinosis disease in livestock. Within the pathway, phomQ2 is involved in the generation of the common 13-membered macrocycle, possibly by catalyzing the hydroxylation of Tyr. The pathway starts with the processing of the precursor phomA by several endopeptidases including kexin proteases as well as the cluster-specific S41 family peptidase phomP1 and the oligopeptidase phomG to produce 10 identical copies of the hexapeptide Tyr-Val-Ile-Pro-Ile-Asp. After being excised from the precursor peptide, the core peptides are cyclized and modified post-translationally by enzymes encoded within the gene cluster. The timing and order of proteolysis of the phomA precursor and PTMs are still unknown. Two tyrosinase-like enzymes, phomQ1 and phomQ2, catalyze the chlorination and hydroxylation of Tyr, respectively. PhomYb, is proposed to be involved in the construction of the macrocyclic structure. The other 4 ustYa family proteins may be involved in PTMs that generate the unique structure of phomopsin A. PhomYa is required for the hydroxylation of C-beta of Tyr. PhomYc, phomYd, and phomYe are responsible for the biosynthesis of 2,3-dehydroisoleucine (dIle), 2,3-dehydroaspartic acid (dAsp), and 3,4-dehydroproline (dPro), respectively. While dIle formation by phomYc is indispensable for the installation of dAsp by phomYd, the order of the other PTMs have not been elucidated yet. Most of the biosynthetic enzymes likely have broad substrate specificity, and thus, there might be a metabolic grid from a precursor to phomopsin A. The enzyme(s) responsible for the biosynthesis of 3,4-dehydrovaline (dVal) have also not been identified yet. Finally, phomM acts as an S-adenosylmethionine-dependent alpha-N-methyltransferase that catalyzes two successive N-methylation reactions, converting N-desmethyl-phomopsin A to phomopsin A and phomopsin A further to an N,N-dimethylated congener called phomopsin E. In Diaporthe leptostromiformis (Lupinosis disease fungus), this protein is Tyrosinase-like protein phomQ2.